We begin with the raw amino-acid sequence, 57 residues long: MKQSEFRRWLEAQGVEVSNGTNHLKLRYQGKRSIMPRHPSQEIKEPLRKAIIKQLGL.

The protein belongs to the HicA mRNA interferase family. In terms of assembly, probably forms a complex with the cognate antitoxin HicB 1 which inhibits the mRNA interferase activity.

Functionally, toxic component of a type II toxin-antitoxin (TA) system. A probable translation-independent mRNA interferase. The chain is Probable mRNA interferase HicA 1 (hicA1) from Photorhabdus laumondii subsp. laumondii (strain DSM 15139 / CIP 105565 / TT01) (Photorhabdus luminescens subsp. laumondii).